A 7094-amino-acid polypeptide reads, in one-letter code: Replicase polyprotein 1ab (7094 aa).

One can recognise a CoV Nsp1 globular domain in the interval 54–196 (PENHVMVDCR…PWVMYLRKCG (143 aa)). The BetaCoV Nsp1 C-terminal domain occupies 216 to 246 (FKVEDAYDLVHDEPKGKFSKKAYALIRGYRG). One can recognise a CoV Nsp2 N-terminal domain in the interval 250 to 519 (LLYVDQYGCD…LICKALYLDY (270 aa)). Zn(2+) is bound by residues cysteine 392, cysteine 397, cysteine 413, and cysteine 416. The tract at residues 392–416 (CEQDLCDFKGWVPGNMIDGFACTTC) is C4. Residues 524–713 (CGNLHQRELL…AQAFRSVAKV (190 aa)) form the CoV Nsp2 middle domain. Positions 733 to 851 (RRRICLSGSK…LDQAWRVPCA (119 aa)) constitute a CoV Nsp2 C-terminal domain. One can recognise a Ubiquitin-like 1 domain in the interval 853-966 (RRVTFKEQPT…LYCAFTAPED (114 aa)). The Peptidase C16 1 domain maps to 1036–1274 (DLESVIQDYE…IAQLYGSCIT (239 aa)). Cysteine 1074 acts as the For PL1-PRO activity in catalysis. Zn(2+) contacts are provided by cysteine 1151, cysteine 1154, cysteine 1177, and cysteine 1179. A C4-type 1 zinc finger spans residues 1151-1179 (CIKCDLALKLKGLDAMFFYGDVVSHVCKC). Residues histidine 1225 and aspartate 1236 each act as for PL1-PRO activity in the active site. The region spanning 1275–1435 (PNVCFVKGDI…LISKCQITAV (161 aa)) is the Macro domain. Residues 1491–1563 (DDARTFVQSN…VAQIKALFLD (73 aa)) enclose the DPUP domain. Residues 1562 to 1617 (LDKVDILLTVDGVNFTNRFVPVGESFGKSLGNVFCDGVNVTKHKCDINYKGKVFFQ) form the Ubiquitin-like 2 domain. Residues 1631 to 1892 (SSFNFDQKEL…KIEYNPDLSQ (262 aa)) form the Peptidase C16 2 domain. Cysteine 1671 acts as the For PL2-PRO activity in catalysis. The Zn(2+) site is built by cysteine 1749, cysteine 1751, cysteine 1783, and cysteine 1785. The C4-type 2 zinc finger occupies 1749–1785 (CKCGVKQEQRTGVDAVMHFGTLSREDLEIGYTVDCSC). Catalysis depends on for PL2-PRO activity residues histidine 1828 and aspartate 1842. The 102-residue stretch at 1906–2007 (IKAQFKTFEK…TYFNRPLLVD (102 aa)) folds into the Nucleic acid-binding domain. The 150-residue stretch at 2020–2169 (DDGGDISESD…ADNKVIYTTE (150 aa)) folds into the G2M domain. The next 3 membrane-spanning stretches (helical) occupy residues 2138-2158 (ISAC…WIKI), 2199-2219 (ACII…NVIF), and 2227-2247 (IGFL…TFSL). Residues 2138–2385 (ISACFNFIKW…ASFIKLFILF (248 aa)) are HD1. The region spanning 2235 to 2296 (GKIAQWIKST…AIDVVQYEAD (62 aa)) is the 3Ecto domain. 2 cysteine pairs are disulfide-bonded: cysteine 2251-cysteine 2275 and cysteine 2266-cysteine 2272. The next 3 helical transmembrane spans lie at 2313 to 2333 (LIVS…LISI), 2343 to 2363 (LFML…ANML), and 2365 to 2385 (AHVF…FILF). The Y1 stretch occupies residues 2383–2473 (ILFRHVAYGC…ELKRPIQPTD (91 aa)). The CoV Nsp3 Y domain occupies 2383 to 2750 (ILFRHVAYGC…LTTPFSLKGG (368 aa)). Zn(2+) contacts are provided by histidine 2387, cysteine 2392, cysteine 2397, cysteine 2400, cysteine 2433, histidine 2436, cysteine 2440, and cysteine 2443. The ZF1 stretch occupies residues 2387–2400 (HVAYGCSKPGCLFC). The tract at residues 2433 to 2443 (CSKHQWNCIDC) is ZF2. A Y2 region spans residues 2474 to 2566 (VAYHTVTDVK…MVDKNLITTA (93 aa)). The interval 2474 to 2750 (VAYHTVTDVK…LTTPFSLKGG (277 aa)) is coV-Y. A Y3 region spans residues 2567–2649 (NTGTSVTETM…DSVMSAVSAG (83 aa)). The tract at residues 2650 to 2750 (LELTDESCNN…LTTPFSLKGG (101 aa)) is Y4. 7 consecutive transmembrane segments (helical) span residues 2752–2772 (VFSY…IGLW), 2824–2844 (STFG…VAVV), 3009–3029 (VFDL…FLAL), 3031–3051 (ASSI…YYLI), 3063–3083 (IVFV…VFQV), 3090–3110 (VYAI…SVIM), and 3115–3135 (LVMY…SVVV). An HD2 region spans residues 2752-3135 (VFSYFVYVCF…FCLLYISVVV (384 aa)). The 98-residue stretch at 3149–3246 (LGTSVRSDGT…TASVSTSFLQ (98 aa)) folds into the Nsp4C domain. The Peptidase C30 domain maps to 3247 to 3549 (SGIVKMVNPT…YQQLAGIKLQ (303 aa)). Active-site for 3CL-PRO activity residues include histidine 3287 and cysteine 3391. A run of 7 helical transmembrane segments spans residues 3558–3578 (GIVC…TAFV), 3588–3608 (TNML…MLLV), 3614–3634 (YLTM…YLVV), 3657–3677 (TYTD…FVTL), 3684–3704 (LFSF…WYMG), 3711–3731 (ILLM…LSMA), and 3755–3775 (IVLV…GLFS). An HD3 region spans residues 3558-3775 (GIVCWIMAST…IISCYWGLFS (218 aa)). In terms of domain architecture, RdRp Nsp7 cofactor spans 3837–3925 (SKLTDVKCAN…DYAKDNTVLQ (89 aa)). Residues 3926–4122 (ALQSEFVNMA…HNEVSATVLQ (197 aa)) form the RdRp Nsp8 cofactor domain. In terms of domain architecture, Nsp9 ssRNA-binding spans 4123-4232 (NNELMPAKLK…GTISSTVRLQ (110 aa)). The 138-residue stretch at 4233–4370 (AGTATEYASN…CVSTDTTVQS (138 aa)) folds into the ExoN/MTase coactivator domain. Zn(2+) is bound by residues cysteine 4306, cysteine 4309, histidine 4315, cysteine 4322, cysteine 4348, cysteine 4351, cysteine 4359, and cysteine 4361. Zinc fingers lie at residues 4306–4322 (CIYC…DGLC) and 4348–4361 (CQVC…SCSC). A NiRAN domain is found at 4375-4630 (FLNRVRGTSV…DCELYVNNAY (256 aa)). 2 residues coordinate Mn(2+): asparagine 4578 and aspartate 4587. The Nsp12 Interface domain occupies 4631–4729 (RLFDLVQYDF…MNMDVDTHRY (99 aa)). Zn(2+) contacts are provided by histidine 4660, cysteine 4666, cysteine 4671, cysteine 4675, and cysteine 4852. In terms of domain architecture, Nsp12 RNA-dependent RNA polymerase spans 4730–5297 (RLSLKDLLLY…NMYLRSAVMQ (568 aa)). Residues 4732–4946 (SLKDLLLYAA…HQKCLKSIAA (215 aa)) form a rdRp Fingers N-ter region. The segment at 4947-4985 (TRGVPVVIGTTKFYGGWDDMLRRLIKDVDNPVLMGWDYP) is rdRp Palm N-ter. Residues 4977 to 5139 (PVLMGWDYPK…CYNSDYASKG (163 aa)) enclose the RdRp catalytic domain. A rdRp Fingers C-ter region spans residues 4986–5044 (KCDRAMPNILRIVSSLVLARKHEACCSQSDRFYRLANECAQVLSEIVMCGGCYYVKPGG). 3 residues coordinate Zn(2+): histidine 5007, cysteine 5010, and cysteine 5011. The tract at residues 5045 to 5180 (TSSGDATTAF…NNGPHEFCSQ (136 aa)) is rdRp Palm C-ter. Residues serine 5124, aspartate 5125, and aspartate 5126 contribute to the active site. Residues 5181–5297 (HTMLVKMDGD…NMYLRSAVMQ (117 aa)) form a rdRp Thumb region. The 113-residue stretch at 5298 to 5410 (SVGACVVCSS…DDFNRIASCK (113 aa)) folds into the CV ZBD domain. 12 residues coordinate Zn(2+): cysteine 5302, cysteine 5305, cysteine 5313, cysteine 5316, cysteine 5323, cysteine 5326, histidine 5330, histidine 5336, cysteine 5347, cysteine 5352, cysteine 5369, and histidine 5372. The (+)RNA virus helicase ATP-binding domain occupies 5553–5734 (SVLETFQNNV…MCCLGPDIFL (182 aa)). An ATP-binding site is contributed by 5578-5585 (GPPGTGKS). The (+)RNA virus helicase C-terminal domain maps to 5735–5904 (GTCYRCPKEI…VETRVQCSTN (170 aa)). Residues 5971 to 6186 (LFITKEEAVK…RCLAVYDCFC (216 aa)) enclose the ExoN domain. Residues aspartate 5989, glutamate 5991, and glutamate 6090 contribute to the active site. Residues cysteine 6106, cysteine 6109, cysteine 6125, histidine 6128, histidine 6156, cysteine 6160, and histidine 6163 each coordinate Zn(2+). Active-site residues include histidine 6167 and aspartate 6172. Cysteine 6178 is a binding site for Zn(2+). One can recognise an N7-MTase domain in the interval 6195–6421 (YPIISNELSI…NLWNTFTKLQ (227 aa)). 6230 to 6236 (DIGNPKA) contributes to the S-adenosyl-L-methionine binding site. Residues 6308–6322 (CNGGSLYVNKHAFHT) are gpppA-binding. Residues cysteine 6346, cysteine 6367, cysteine 6378, and histidine 6381 each coordinate Zn(2+). Residues 6422 to 6482 (SLENVVYNLV…NVAVELFAKR (61 aa)) form the Nsp15 N-terminal oligomerization domain. The AV-Nsp11N/CoV-Nsp15M domain occupies 6483–6603 (SIRHHPELKL…FAVRKEGQDV (121 aa)). In terms of domain architecture, NendoU spans 6653-6792 (TCRTDMEKDF…NDEKVMTFYP (140 aa)). Residues histidine 6683, histidine 6698, lysine 6738, lysine 6841, aspartate 6925, lysine 6965, and glutamate 6998 contribute to the active site. The region spanning 6797 to 7091 (ASDWKPGYSM…KEVFVGDSLV (295 aa)) is the Nidovirus-type SAM-dependent 2'-O-MTase domain.

This sequence belongs to the coronaviruses polyprotein 1ab family. In terms of assembly, interacts with host PHB and PHB2. Interacts with papain-like protease nsp3 and non-structural protein 6. As to quaternary structure, monomer. Homodimer. Only the homodimer shows catalytic activity. In terms of assembly, interacts with nsp8 and nsp12 to form the replication-transcription complex (RTC): nsp12, nsp7, two subunits of nsp8, and up to two subunits of nsp13. Interacts with nsp7, nsp13 and nsp12 to form the replication-transcription complex (RTC): nsp12, nsp7, two subunits of nsp8, and up to two subunits of nsp13. As to quaternary structure, interacts with nsp12. In terms of assembly, interacts with proofreading exoribonuclease nsp14 and 2'-O-methyltransferase nsp16; these interactions enhance nsp14 and nsp16 enzymatic activities. Interacts with nsp7 and nsp8 to form the replication-transcription complex (RTC): nsp12, nsp7, two subunits of nsp8, and up to two subunits of nsp13. Interacts with nsp9. As to quaternary structure, interacts with nsp8 to form the replication-transcription complex (RTC): nsp12, nsp7, two subunits of nsp8, and up to two subunits of nsp13. Mn(2+) serves as cofactor. Mg(2+) is required as a cofactor. In terms of processing, specific enzymatic cleavages in vivo by its own proteases yield mature proteins. 3CL-PRO and PL-PRO proteinases are autocatalytically processed.

Its subcellular location is the host membrane. It is found in the host cytoplasm. The protein localises to the host perinuclear region. The protein resides in the host endoplasmic reticulum-Golgi intermediate compartment. The catalysed reaction is RNA(n) + a ribonucleoside 5'-triphosphate = RNA(n+1) + diphosphate. It carries out the reaction ATP + H2O = ADP + phosphate + H(+). The enzyme catalyses Thiol-dependent hydrolysis of ester, thioester, amide, peptide and isopeptide bonds formed by the C-terminal Gly of ubiquitin (a 76-residue protein attached to proteins as an intracellular targeting signal).. It catalyses the reaction a 5'-end (N(7)-methyl 5'-triphosphoguanosine)-ribonucleoside in mRNA + S-adenosyl-L-methionine = a 5'-end (N(7)-methyl 5'-triphosphoguanosine)-(2'-O-methyl-ribonucleoside) in mRNA + S-adenosyl-L-homocysteine + H(+). The catalysed reaction is uridylyl-uridylyl-ribonucleotide-RNA = a 3'-end uridylyl-2',3'-cyclophospho-uridine-RNA + a 5'-end dephospho-ribonucleoside-RNA. It carries out the reaction a 5'-end diphospho-ribonucleoside in mRNA + GTP + H(+) = a 5'-end (5'-triphosphoguanosine)-ribonucleoside in mRNA + diphosphate. The enzyme catalyses a 5'-end (5'-triphosphoguanosine)-ribonucleoside in mRNA + S-adenosyl-L-methionine = a 5'-end (N(7)-methyl 5'-triphosphoguanosine)-ribonucleoside in mRNA + S-adenosyl-L-homocysteine. The replicase polyprotein of coronaviruses is a multifunctional protein: it contains the activities necessary for the transcription of negative stranded RNA, leader RNA, subgenomic mRNAs and progeny virion RNA as well as proteinases responsible for the cleavage of the polyprotein into functional products. Functionally, inhibits host translation by interacting with the 40S ribosomal subunit. The nsp1-40S ribosome complex further induces an endonucleolytic cleavage near the 5'UTR of host mRNAs, targeting them for degradation. Viral mRNAs are not susceptible to nsp1-mediated endonucleolytic RNA cleavage thanks to the presence of a 5'-end leader sequence and are therefore protected from degradation. By suppressing host gene expression, nsp1 facilitates efficient viral gene expression in infected cells and evasion from host immune response. Its function is as follows. May play a role in the modulation of host cell survival signaling pathway by interacting with host PHB and PHB2. Indeed, these two proteins play a role in maintaining the functional integrity of the mitochondria and protecting cells from various stresses. In terms of biological role, responsible for the cleavages located at the N-terminus of the replicase polyprotein. In addition, PL-PRO possesses a deubiquitinating/deISGylating activity and processes both 'Lys-48'- and 'Lys-63'-linked polyubiquitin chains from cellular substrates. Participates together with nsp4 in the assembly of virally-induced cytoplasmic double-membrane vesicles necessary for viral replication. Antagonizes innate immune induction of type I interferon by blocking the phosphorylation, dimerization and subsequent nuclear translocation of host IRF3. Also prevents host NF-kappa-B signaling. Participates in the assembly of virally-induced cytoplasmic double-membrane vesicles necessary for viral replication. Functionally, cleaves the C-terminus of replicase polyprotein at 11 sites. Recognizes substrates containing the core sequence [ILMVF]-Q-|-[SGACN]. Also able to bind an ADP-ribose-1''-phosphate (ADRP). Its function is as follows. Plays a role in the initial induction of autophagosomes from host endoplasmic reticulum. Later, limits the expansion of these phagosomes that are no longer able to deliver viral components to lysosomes. In terms of biological role, forms a hexadecamer with nsp8 (8 subunits of each) that may participate in viral replication by acting as a primase. Alternatively, may synthesize substantially longer products than oligonucleotide primers. Forms a hexadecamer with nsp7 (8 subunits of each) that may participate in viral replication by acting as a primase. Alternatively, may synthesize substantially longer products than oligonucleotide primers. Functionally, forms a primer, NSP9-pU, which is utilized by the polymerase for the initiation of RNA chains. Interacts with ribosome signal recognition particle RNA (SRP). Together with NSP8, suppress protein integration into the cell membrane, thereby disrupting host immune defenses. Its function is as follows. Plays a pivotal role in viral transcription by stimulating both nsp14 3'-5' exoribonuclease and nsp16 2'-O-methyltransferase activities. Therefore plays an essential role in viral mRNAs cap methylation. In terms of biological role, RNA-directed RNA polymerase that catalyzes the transcription of viral genomic and subgenomic RNAs. Acts in complex with nsp7 and nsp8 to transcribe both the minus and positive strands of genomic RNA. The kinase-like NiRAN domain of NSP12 attaches one or more nucleotides to the amino terminus of NSP9, forming a covalent RNA-protein intermediate that serves as transcription/replication primer. Subgenomic RNAs (sgRNAs) are formed by discontinuous transcription: The polymerase has the ability to pause at transcription-regulating sequences (TRS) and jump to the leader TRS, resulting in a major deletion. This creates a series of subgenomic RNAs that are replicated, transcribed and translated. In addition, Nsp12 is a subunit of the viral RNA capping enzyme that catalyzes the RNA guanylyltransferase reaction for genomic and sub-genomic RNAs. Subsequently, the NiRAN domain transfers RNA to GDP, and forms the core cap structure GpppA-RNA. Multi-functional protein with a zinc-binding domain in N-terminus displaying RNA and DNA duplex-unwinding activities with 5' to 3' polarity. Activity of helicase is dependent on magnesium. Functionally, plays a role in viral RNA synthesis through two distinct activities. The N7-guanine methyltransferase activity plays a role in the formation of the cap structure GpppA-RNA. The proofreading exoribonuclease reduces the sensitivity of the virus to RNA mutagens during replication. This activity acts on both ssRNA and dsRNA in a 3'-5' direction. Its function is as follows. Plays a role in viral transcription/replication and prevents the simultaneous activation of host cell dsRNA sensors, such as MDA5/IFIH1, OAS, and PKR. Acts by degrading the 5'-polyuridines generated during replication of the poly(A) region of viral genomic and subgenomic RNAs. Catalyzes a two-step reaction in which a 2'3'-cyclic phosphate (2'3'-cP) is first generated by 2'-O transesterification, which is then hydrolyzed to a 3'-phosphate (3'-P). If not degraded, poly(U) RNA would hybridize with poly(A) RNA tails and activate host dsRNA sensors. In terms of biological role, methyltransferase that mediates mRNA cap 2'-O-ribose methylation to the 5'-cap structure of viral mRNAs. N7-methyl guanosine cap is a prerequisite for binding of nsp16. Therefore plays an essential role in viral mRNAs cap methylation which is essential to evade immune system. The protein is Replicase polyprotein 1ab (rep) of Bos taurus (Bovine).